Reading from the N-terminus, the 226-residue chain is Ribonuclease S-7 (226 aa).

The first 27 residues, 1-27 (MGITGMIYIVTMVFSLIVLILSSSTVG), serve as a signal peptide directing secretion. Gln-36 serves as a coordination point for RNA. The cysteines at positions 42 and 49 are disulfide-linked. His-60 is an RNA binding site. His-60 functions as the Proton donor in the catalytic mechanism. N-linked (GlcNAc...) asparagine; alternate glycosylation is found at Asn-74 and Asn-77. The cysteines at positions 75 and 119 are disulfide-linked. Residues 98-99 (NV), Phe-108, 111-112 (KQ), and 115-116 (KH) each bind RNA. Gln-112 is a catalytic residue. Residue His-116 is the Proton acceptor of the active site. Residues Asn-126, Asn-144, and Asn-172 are each glycosylated (N-linked (GlcNAc...) asparagine). Intrachain disulfides connect Cys-183–Cys-220 and Cys-198–Cys-209.

Belongs to the RNase T2 family. The N-glycans attached at Asn-74 and Asn-77 consist of either monosaccharide (GlcNAc) or disaccharide (GlcNAc-GlcNAc) that could not be distinguished. The N-glycan at Asn-144 contains mannose and xylose, and at Asn-126 contains mannose, xylose and fucose. The N-glycan at Asn-172 consists of disaccharide (GlcNAc-GlcNAc).

The catalysed reaction is a ribonucleotidyl-ribonucleotide-RNA + H2O = a 3'-end 3'-phospho-ribonucleotide-RNA + a 5'-end dephospho-ribonucleoside-RNA + H(+). Functionally, self-incompatibility (SI) is the inherited ability of a flowering plant to prevent self-fertilization by discriminating between self and non-self pollen during pollination. In many species, self-incompatibility is controlled by the single, multiallelic locus S. This chain is Ribonuclease S-7, found in Pyrus pyrifolia (Chinese pear).